Reading from the N-terminus, the 119-residue chain is Ribonuclease P protein component (119 aa).

The protein belongs to the RnpA family. Consists of a catalytic RNA component (M1 or rnpB) and a protein subunit.

The enzyme catalyses Endonucleolytic cleavage of RNA, removing 5'-extranucleotides from tRNA precursor.. In terms of biological role, RNaseP catalyzes the removal of the 5'-leader sequence from pre-tRNA to produce the mature 5'-terminus. It can also cleave other RNA substrates such as 4.5S RNA. The protein component plays an auxiliary but essential role in vivo by binding to the 5'-leader sequence and broadening the substrate specificity of the ribozyme. This is Ribonuclease P protein component from Bacillus cereus (strain ZK / E33L).